Here is a 231-residue protein sequence, read N- to C-terminus: Tol-Pal system protein TolQ (231 aa).

Helical transmembrane passes span 20-40 (IVVQ…WIMI), 134-154 (FLAT…VWGI), and 176-196 (IAEA…AVIA).

This sequence belongs to the ExbB/TolQ family. As to quaternary structure, the Tol-Pal system is composed of five core proteins: the inner membrane proteins TolA, TolQ and TolR, the periplasmic protein TolB and the outer membrane protein Pal. They form a network linking the inner and outer membranes and the peptidoglycan layer.

Its subcellular location is the cell inner membrane. Part of the Tol-Pal system, which plays a role in outer membrane invagination during cell division and is important for maintaining outer membrane integrity. The chain is Tol-Pal system protein TolQ from Pseudomonas aeruginosa (strain ATCC 15692 / DSM 22644 / CIP 104116 / JCM 14847 / LMG 12228 / 1C / PRS 101 / PAO1).